The primary structure comprises 148 residues: 3-dehydroquinate dehydratase (148 aa).

Catalysis depends on Y23, which acts as the Proton acceptor. Substrate-binding residues include N75, H81, and D88. H101 functions as the Proton donor in the catalytic mechanism. Substrate is bound by residues 102-103 (LS) and R112.

This sequence belongs to the type-II 3-dehydroquinase family. In terms of assembly, homododecamer.

It catalyses the reaction 3-dehydroquinate = 3-dehydroshikimate + H2O. It functions in the pathway metabolic intermediate biosynthesis; chorismate biosynthesis; chorismate from D-erythrose 4-phosphate and phosphoenolpyruvate: step 3/7. Catalyzes a trans-dehydration via an enolate intermediate. This Halorhodospira halophila (strain DSM 244 / SL1) (Ectothiorhodospira halophila (strain DSM 244 / SL1)) protein is 3-dehydroquinate dehydratase.